An 859-amino-acid polypeptide reads, in one-letter code: ATP-dependent DNA helicase PIF1 (859 aa).

The transit peptide at 1 to 45 directs the protein to the mitochondrion; it reads MPKWIRSTLNHIIPRRPFICSFNSFLLLKNVSHAKLSFSMSSRGF. S70 and S72 each carry phosphoserine. The span at 142–157 shows a compositional bias: polar residues; the sequence is NSFDQSSQKKSRSTGF. Residues 142 to 183 are disordered; it reads NSFDQSSQKKSRSTGFKNPLRPALKKESSFDELQNSSISQER. At S169 the chain carries Phosphoserine. The span at 172 to 182 shows a compositional bias: polar residues; the sequence is DELQNSSISQE. 258–265 contributes to the ATP binding site; it reads GSAGTGKS. S584 carries the post-translational modification Phosphoserine. A DNA-binding region spans residues 727–746; that stretch reads QAYVALSRAVSREGLQVLNF. Residues 782–859 are disordered; that stretch reads KRKLDYAPGP…GQDTEDHILE (78 aa). Over residues 800 to 809 the composition is skewed to low complexity; the sequence is KSNSPAPISA. Residues 844-859 are compositionally biased toward basic and acidic residues; the sequence is VSDEPRGQDTEDHILE.

It belongs to the helicase family. PIF1 subfamily. In terms of assembly, monomer in solution. DNA binding induces dimerization. Associates with mitochondrial and telomeric DNA. Binding to mtDNA is non-specific and the protein seems to coat the entire mtDNA molecule. Binds to the telomerase RNA TLC1. Interacts with the mitochondrial single-strand DNA-binding protein RIM1. Mg(2+) is required as a cofactor. Mn(2+) serves as cofactor. Phosphorylated. Undergoes RAD53-dependent phosphorylation in response to loss of mtDNA.

The protein resides in the nucleus. The protein localises to the nucleolus. It localises to the mitochondrion inner membrane. The catalysed reaction is Couples ATP hydrolysis with the unwinding of duplex DNA at the replication fork by translocating in the 5'-3' direction. This creates two antiparallel DNA single strands (ssDNA). The leading ssDNA polymer is the template for DNA polymerase III holoenzyme which synthesizes a continuous strand.. The enzyme catalyses ATP + H2O = ADP + phosphate + H(+). DNA-dependent ATPase and 5'-3' DNA helicase required for the maintenance of both mitochondrial and nuclear genome stability. Efficiently unwinds G-quadruplex (G4) DNA structures and forked RNA-DNA hybrids. Appears to move along DNA in single nucleotide or base pair steps, powered by hydrolysis of 1 molecule of ATP. Processes at an unwinding rate of about 75 bp/s. Resolves G4 structures, preventing replication pausing and double-strand breaks (DSBs) at G4 motifs. Involved in the maintenance of telomeric DNA. Inhibits telomere elongation, de novo telomere formation and telomere addition to DSBs via catalytic inhibition of telomerase. Reduces the processivity of telomerase by displacing active telomerase from DNA ends. Releases telomerase by unwinding the short telomerase RNA/telomeric DNA hybrid that is the intermediate in the telomerase reaction. Involved in the maintenance of ribosomal (rDNA). Required for efficient fork arrest at the replication fork barrier within rDNA. Involved in the maintenance of mitochondrial (mtDNA). Required to maintain mtDNA under conditions that introduce dsDNA breaks in mtDNA, either preventing or repairing dsDNA breaks. May inhibit replication progression to allow time for repair. May have a general role in chromosomal replication by affecting Okazaki fragment maturation. May have a role in conjunction with DNA2 helicase/nuclease in 5'-flap extension during Okazaki fragment processing. In Saccharomyces cerevisiae (strain YJM789) (Baker's yeast), this protein is ATP-dependent DNA helicase PIF1.